A 510-amino-acid chain; its full sequence is Mitogen-activated protein kinase 9 (510 aa).

A Protein kinase domain is found at 23–314; that stretch reads YQIQEVIGKG…AEEALADPYF (292 aa). Residues 29–37 and lysine 52 each bind ATP; that span reads IGKGSYGVV. Catalysis depends on aspartate 149, which acts as the Proton acceptor. Position 185 is a phosphothreonine (threonine 185). A TXY motif is present at residues 185–187; the sequence is TDY. Phosphotyrosine is present on tyrosine 187. At threonine 190 the chain carries Phosphothreonine. A disordered region spans residues 393-461; the sequence is NYGKGEKGSP…SDYRNGTSQT (69 aa). The segment covering 410–431 has biased composition (basic and acidic residues); sequence LPRERVPAPKKENGSHNHDIEN. Residues 433–461 show a composition bias toward polar residues; that stretch reads SIASLVTTLESPPTSQHEGSDYRNGTSQT.

Belongs to the protein kinase superfamily. CMGC Ser/Thr protein kinase family. MAP kinase subfamily. Dually phosphorylated on Thr-185 and Tyr-187, which activates the enzyme.

The catalysed reaction is L-seryl-[protein] + ATP = O-phospho-L-seryl-[protein] + ADP + H(+). It catalyses the reaction L-threonyl-[protein] + ATP = O-phospho-L-threonyl-[protein] + ADP + H(+). Activated by threonine and tyrosine phosphorylation. This chain is Mitogen-activated protein kinase 9 (MPK9), found in Arabidopsis thaliana (Mouse-ear cress).